The primary structure comprises 498 residues: ATP synthase subunit beta, chloroplastic (498 aa).

Position 172–179 (172–179) interacts with ATP; sequence GGAGVGKT.

It belongs to the ATPase alpha/beta chains family. F-type ATPases have 2 components, CF(1) - the catalytic core - and CF(0) - the membrane proton channel. CF(1) has five subunits: alpha(3), beta(3), gamma(1), delta(1), epsilon(1). CF(0) has four main subunits: a(1), b(1), b'(1) and c(9-12).

It is found in the plastid. Its subcellular location is the chloroplast thylakoid membrane. The enzyme catalyses ATP + H2O + 4 H(+)(in) = ADP + phosphate + 5 H(+)(out). Functionally, produces ATP from ADP in the presence of a proton gradient across the membrane. The catalytic sites are hosted primarily by the beta subunits. This chain is ATP synthase subunit beta, chloroplastic, found in Idiospermum australiense (Ribbonwood tree).